The following is a 290-amino-acid chain: uncharacterized protein (290 aa).

It localises to the cytoplasm. This is an uncharacterized protein from Saccharomyces cerevisiae (strain ATCC 204508 / S288c) (Baker's yeast).